The chain runs to 62 residues: 6.7 kDa chloroplast outer envelope membrane protein (62 aa).

Residues 1 to 17 are Chloroplast intermembrane-facing; sequence MESVAKPATTKEGSAKQ. Residues 18–40 traverse the membrane as a helical segment; the sequence is AAIVVGVLALGWFAIQVAFIPLF. Topologically, residues 41–62 are cytoplasmic; sequence NKVRGGGSDKKDDDVNAFTPDT.

The protein resides in the plastid. The protein localises to the chloroplast outer membrane. The polypeptide is 6.7 kDa chloroplast outer envelope membrane protein (Spinacia oleracea (Spinach)).